We begin with the raw amino-acid sequence, 126 residues long: uncharacterized protein (126 aa).

This is an uncharacterized protein from Archaeoglobus fulgidus (strain ATCC 49558 / DSM 4304 / JCM 9628 / NBRC 100126 / VC-16).